Reading from the N-terminus, the 148-residue chain is 3-hydroxyacyl-[acyl-carrier-protein] dehydratase FabZ (148 aa).

His48 is a catalytic residue.

Belongs to the thioester dehydratase family. FabZ subfamily.

The protein resides in the cytoplasm. It catalyses the reaction a (3R)-hydroxyacyl-[ACP] = a (2E)-enoyl-[ACP] + H2O. Functionally, involved in unsaturated fatty acids biosynthesis. Catalyzes the dehydration of short chain beta-hydroxyacyl-ACPs and long chain saturated and unsaturated beta-hydroxyacyl-ACPs. The protein is 3-hydroxyacyl-[acyl-carrier-protein] dehydratase FabZ of Acinetobacter baylyi (strain ATCC 33305 / BD413 / ADP1).